Here is a 220-residue protein sequence, read N- to C-terminus: Riboflavin kinase (220 aa).

The H-T-H motif-like stretch occupies residues 1 to 92 (MDTSDQYYRA…LSRILSIKSN (92 aa)). The tract at residues 93–220 (IVMTGIVVPG…GDEVTIEVTA (128 aa)) is riboflavin kinase. 102–107 (GMGEGK) contributes to the CDP binding site. Positions 131 and 133 each coordinate Mg(2+). Residues Thr188 and Glu195 each contribute to the FMN site. 200-203 (KYLR) lines the CDP pocket.

Belongs to the archaeal riboflavin kinase family. Mg(2+) is required as a cofactor.

The catalysed reaction is riboflavin + CTP = CDP + FMN + H(+). The protein operates within cofactor biosynthesis; FMN biosynthesis; FMN from riboflavin (CTP route): step 1/1. Functionally, catalyzes the CTP-dependent phosphorylation of riboflavin (vitamin B2) to form flavin mononucleotide (FMN). The sequence is that of Riboflavin kinase (ribK) from Thermoplasma volcanium (strain ATCC 51530 / DSM 4299 / JCM 9571 / NBRC 15438 / GSS1).